Reading from the N-terminus, the 156-residue chain is MPRRGAPPKREIPPDPVYGSVLVQQLINKVMKDGKKSKAEKIVYNALSMVEERTGDNPVTVLSQALDNIKPRLEVRSRRVGGATYQVPVEVPPRRANTLALRWLVNFARARREKTMGHRLAGEILDAKDNIGASIRKKEETHRMAEANRAFAHYRW.

The protein belongs to the universal ribosomal protein uS7 family. Part of the 30S ribosomal subunit. Contacts proteins S9 and S11.

Its function is as follows. One of the primary rRNA binding proteins, it binds directly to 16S rRNA where it nucleates assembly of the head domain of the 30S subunit. Is located at the subunit interface close to the decoding center, probably blocks exit of the E-site tRNA. This chain is Small ribosomal subunit protein uS7, found in Rubrobacter xylanophilus (strain DSM 9941 / JCM 11954 / NBRC 16129 / PRD-1).